The following is a 1984-amino-acid chain: Spermatogenesis-associated protein 31H1 (1984 aa).

Disordered stretches follow at residues 448–467 (MGLT…TPGP), 1045–1067 (PMEE…QHSL), 1181–1287 (YRER…SDSK), 1326–1346 (RIGA…KPSQ), and 1439–1984 (QQPR…EATR). Composition is skewed to polar residues over residues 450–463 (LTKS…SPGT), 1058–1067 (TRISESQHSL), and 1205–1226 (TQAS…QSPA). The segment covering 1238–1247 (SRPDLVEKTK) has biased composition (basic and acidic residues). Polar residues-rich tracts occupy residues 1458-1471 (TDSQ…TASV) and 1492-1508 (RNET…TPGT). Basic and acidic residues-rich tracts occupy residues 1532–1558 (DKLT…ERTR) and 1568–1579 (SPSERSQRSSLE). 3 repeat units span residues 1593–1600 (PSRKNHSS), 1601–1608 (PSERSWRS), and 1609–1616 (PSQRNHCS). Positions 1593–1935 (PSRKNHSSPS…CSPSERSRRS (343 aa)) are 27 X 8 AA approximate tandem repeat of P-S-E-R-S-H-H-S. Residues 1599 to 1610 (SSPSERSWRSPS) are compositionally biased toward low complexity. Positions 1620 to 1630 (RSCHSLSERGL) are enriched in basic and acidic residues. A compositionally biased stretch (basic residues) spans 1636–1647 (RSHRGPSQRRHH). Repeat copies occupy residues 1641-1648 (PSQRRHHS), 1649-1656 (PSERSHRS), and 1657-1664 (PSERSHRS). A compositionally biased stretch (basic and acidic residues) spans 1648-1667 (SPSERSHRSPSERSHRSSSE). Residues 1668-1679 (RRHRSPSQRSHR) show a composition bias toward basic residues. Positions 1680–1691 (GPSERSHCSPSE) are enriched in basic and acidic residues. 19 consecutive repeat copies span residues 1681 to 1688 (PSERSHCS), 1689 to 1696 (PSERRHRS), 1697 to 1704 (PSQRSHRG), 1705 to 1712 (PSERRHHS), 1713 to 1720 (PSKRSHRS), 1721 to 1728 (PARRSHRS), 1729 to 1736 (PSERSHHS), 1737 to 1744 (PSERSHHS), 1745 to 1752 (PSERRHHS), 1753 to 1760 (PSERSHCS), 1761 to 1768 (PSERSHCS), 1769 to 1776 (PSERRHRS), 1777 to 1784 (PSERRHHS), 1785 to 1792 (PSEKSHHS), 1793 to 1800 (PSERSHHS), 1801 to 1808 (PSERRRHS), 1848 to 1855 (PSEKSHLS), 1864 to 1871 (PSERRGHS), and 1880 to 1887 (PSERSHRS). Basic residues predominate over residues 1692-1727 (RRHRSPSQRSHRGPSERRHHSPSKRSHRSPARRSHR). Over residues 1728–1869 (SPSERSHHSP…SRCSPSERRG (142 aa)) the composition is skewed to basic and acidic residues. Composition is skewed to basic and acidic residues over residues 1895–1917 (RTSE…EMRP), 1928–1941 (PSER…KEGL), and 1949–1959 (RPSHSLSRDFK). 2 consecutive repeat copies span residues 1921 to 1928 (SGRNHCSP) and 1929 to 1935 (SERSRRS). Over residues 1960 to 1969 (NQTTLLGTTH) the composition is skewed to polar residues.

Expressed in sperm (at protein level).

This chain is Spermatogenesis-associated protein 31H1, found in Homo sapiens (Human).